The chain runs to 397 residues: Lysophospholipid transporter LplT (397 aa).

The Periplasmic portion of the chain corresponds to 1 to 17; the sequence is MSESVHTNTSLWSKGMK. A helical transmembrane segment spans residues 18–38; it reads AVIVAQFLSAFGDNALLFATL. The Cytoplasmic portion of the chain corresponds to 39–52; the sequence is ALLKAQFYPEWSQP. Residues 53 to 73 traverse the membrane as a helical segment; that stretch reads ILQMVFVGAYILFAPFVGQVA. The Periplasmic portion of the chain corresponds to 74–90; that stretch reads DSFAKGRVMMFANGLKL. A helical transmembrane segment spans residues 91–111; it reads LGAASICFGINPFLGYTLVGV. At 112 to 144 the chain is on the cytoplasmic side; the sequence is GAAAYSPAKYGILGELTTGSKLVKANGLMEAST. Residues 145 to 165 traverse the membrane as a helical segment; the sequence is IAAILLGSVAGGVLADWHVLV. Alanine 166 is a topological domain (periplasmic). Residues 167–187 form a helical membrane-spanning segment; sequence LAACALAYGGAVVANIYIPKL. Topologically, residues 188 to 226 are cytoplasmic; that stretch reads AAARPGQSWNLINMTRSFLNACTSLWRNGETRFSLVGTS. A helical transmembrane segment spans residues 227 to 247; sequence LFWGAGVTLRFLLVLWVPVAL. At 248–256 the chain is on the periplasmic side; it reads GITDNATPT. A helical transmembrane segment spans residues 257-277; the sequence is YLNAMVAIGIVVGAGAAAKLV. The Cytoplasmic segment spans residues 278-280; the sequence is TLE. A helical transmembrane segment spans residues 281–301; the sequence is TVSRCMPAGILIGVVVLIFSL. Over 302–304 the chain is Periplasmic; it reads QHE. Residues 305–325 traverse the membrane as a helical segment; the sequence is LLPAYALLMLIGVLGGFFVVP. Over 326–343 the chain is Cytoplasmic; sequence LNALLQERGKKSVGAGNA. The chain crosses the membrane as a helical span at residues 344 to 364; the sequence is IAVQNLGENSAMLLMLGIYSL. Residues 365–366 are Periplasmic-facing; sequence AV. Residues 367–387 traverse the membrane as a helical segment; sequence MVGIPVVPIGIGFGTLFALAI. Residues 388 to 397 are Cytoplasmic-facing; it reads TALWIWQRRH.

The protein belongs to the major facilitator superfamily. LplT (TC 2.A.1.42) family.

Its subcellular location is the cell inner membrane. In terms of biological role, catalyzes the facilitated diffusion of 2-acyl-glycero-3-phosphoethanolamine (2-acyl-GPE) into the cell. This Escherichia coli O9:H4 (strain HS) protein is Lysophospholipid transporter LplT.